Here is a 219-residue protein sequence, read N- to C-terminus: Tritrans,polycis-undecaprenyl-diphosphate synthase (geranylgeranyl-diphosphate specific) (219 aa).

Residue Asp12 is part of the active site. Mg(2+) is bound at residue Asp12. Substrate contacts are provided by residues 13-16 (GNRR), Trp17, and 59-61 (SRD). Asn62 acts as the Proton acceptor in catalysis. Residues Arg66, Arg168, and 174–176 (RLS) each bind substrate. Residue Glu187 coordinates Mg(2+).

The protein belongs to the UPP synthase family. In terms of assembly, homodimer. The cofactor is Mg(2+).

It carries out the reaction geranylgeranyl diphosphate + 7 isopentenyl diphosphate = tri-trans,hepta-cis-undecaprenyl diphosphate + 7 diphosphate. Functionally, catalyzes the sequential condensation of isopentenyl diphosphate (IPP) with geranylgeranyl diphosphate (GGPP) to yield (2Z,6Z,10Z,14Z,18Z,22Z,26Z,30E,34E,38E)-undecaprenyl diphosphate (tritrans,heptacis-UPP). It is probably the precursor of glycosyl carrier lipids. The chain is Tritrans,polycis-undecaprenyl-diphosphate synthase (geranylgeranyl-diphosphate specific) from Aeropyrum pernix (strain ATCC 700893 / DSM 11879 / JCM 9820 / NBRC 100138 / K1).